Consider the following 447-residue polypeptide: Tyrosine aminotransferase (447 aa).

K273 bears the N6-(pyridoxal phosphate)lysine mark. The residue at position 441 (S441) is a Phosphoserine.

Belongs to the class-I pyridoxal-phosphate-dependent aminotransferase family. Homodimer. Requires pyridoxal 5'-phosphate as cofactor.

It carries out the reaction L-tyrosine + 2-oxoglutarate = 3-(4-hydroxyphenyl)pyruvate + L-glutamate. Its pathway is amino-acid degradation; L-phenylalanine degradation; acetoacetate and fumarate from L-phenylalanine: step 2/6. In terms of biological role, transaminase involved in tyrosine breakdown. Converts tyrosine to p-hydroxyphenylpyruvate. Can catalyze the reverse reaction, using glutamic acid, with 2-oxoglutarate as cosubstrate (in vitro). Has much lower affinity and transaminase activity for phenylalanine. This Bos taurus (Bovine) protein is Tyrosine aminotransferase (TAT).